We begin with the raw amino-acid sequence, 275 residues long: COP9 signalosome complex subunit 7a (275 aa).

Position 2 is an N-acetylserine (Ser2). The region spanning 2 to 159 (SAEVKVTGQN…QRLEVDYSIG (158 aa)) is the PCI domain. The stretch at 185–233 (LSGIEEQVSRANQHKEQQLGLKQQIESEVANLKKTIKVTTAAAAAATSQ) forms a coiled coil. The tract at residues 228–275 (AAATSQDPEQHLTELREPASGTNQRQPSKKASKGKGLRGSAKIWSKSN) is disordered. Basic and acidic residues predominate over residues 235-244 (PEQHLTELRE). Positions 254 to 263 (PSKKASKGKG) are enriched in basic residues.

This sequence belongs to the CSN7/EIF3M family. CSN7 subfamily. As to quaternary structure, component of the CSN complex, composed of COPS1/GPS1, COPS2, COPS3, COPS4, COPS5, COPS6, COPS7 (COPS7A or COPS7B), COPS8 and COPS9. In the complex, it probably interacts directly with COPS1, COPS2, COPS4, COPS5, COPS6 and COPS8. Interacts with PMF1. Interacts with the translation initiation factor EIF3S6. Interacts with CK2 and PKD. Interacts directly with ID3. Phosphorylated by CK2 and PKD kinases.

It localises to the cytoplasm. The protein resides in the nucleus. Its function is as follows. Component of the COP9 signalosome complex (CSN), a complex involved in various cellular and developmental processes. The CSN complex is an essential regulator of the ubiquitin (Ubl) conjugation pathway by mediating the deneddylation of the cullin subunits of SCF-type E3 ligase complexes, leading to decrease the Ubl ligase activity of SCF-type complexes such as SCF, CSA or DDB2. The complex is also involved in phosphorylation of p53/TP53, JUN, I-kappa-B-alpha/NFKBIA, ITPK1 and IRF8/ICSBP, possibly via its association with CK2 and PKD kinases. CSN-dependent phosphorylation of TP53 and JUN promotes and protects degradation by the Ubl system, respectively. This chain is COP9 signalosome complex subunit 7a (Cops7a), found in Mus musculus (Mouse).